The chain runs to 292 residues: Protein/nucleic acid deglycase HchA (292 aa).

Residues 1–12 are compositionally biased toward polar residues; that stretch reads MSQDVNELSKQP. Residues 1-23 are disordered; sequence MSQDVNELSKQPTPDKAEDNAFF. Residue Cys190 is the Nucleophile of the active site.

It belongs to the peptidase C56 family. HchA subfamily.

It localises to the cytoplasm. The enzyme catalyses N(omega)-(1-hydroxy-2-oxopropyl)-L-arginyl-[protein] + H2O = lactate + L-arginyl-[protein] + H(+). The catalysed reaction is N(6)-(1-hydroxy-2-oxopropyl)-L-lysyl-[protein] + H2O = lactate + L-lysyl-[protein] + H(+). It carries out the reaction S-(1-hydroxy-2-oxopropyl)-L-cysteinyl-[protein] + H2O = lactate + L-cysteinyl-[protein] + H(+). It catalyses the reaction N(omega)-(1-hydroxy-2-oxoethyl)-L-arginyl-[protein] + H2O = L-arginyl-[protein] + glycolate + H(+). The enzyme catalyses N(6)-(1-hydroxy-2-oxoethyl)-L-lysyl-[protein] + H2O = glycolate + L-lysyl-[protein] + H(+). The catalysed reaction is S-(1-hydroxy-2-oxoethyl)-L-cysteinyl-[protein] + H2O = glycolate + L-cysteinyl-[protein] + H(+). It carries out the reaction N(2)-(1-hydroxy-2-oxopropyl)-dGTP + H2O = lactate + dGTP + H(+). It catalyses the reaction N(2)-(1-hydroxy-2-oxopropyl)-GTP + H2O = lactate + GTP + H(+). The enzyme catalyses N(2)-(1-hydroxy-2-oxopropyl)-GDP + H2O = lactate + GDP + H(+). The catalysed reaction is N(2)-(1-hydroxy-2-oxopropyl)-GMP + H2O = lactate + GMP + H(+). It carries out the reaction N(2)-(1-hydroxy-2-oxoethyl)-dGTP + H2O = dGTP + glycolate + H(+). It catalyses the reaction N(2)-(1-hydroxy-2-oxoethyl)-GTP + H2O = glycolate + GTP + H(+). The enzyme catalyses N(2)-(1-hydroxy-2-oxoethyl)-GDP + H2O = glycolate + GDP + H(+). The catalysed reaction is N(2)-(1-hydroxy-2-oxoethyl)-GMP + H2O = glycolate + GMP + H(+). It carries out the reaction an N(2)-(1-hydroxy-2-oxopropyl)-guanosine in RNA + H2O = a guanosine in RNA + lactate + H(+). It catalyses the reaction an N(2)-(1-hydroxy-2-oxopropyl)-2'-deoxyguanosine in DNA + H2O = a 2'-deoxyguanosine in DNA + lactate + H(+). The enzyme catalyses an N(2)-(1-hydroxy-2-oxoethyl)-guanosine in RNA + H2O = a guanosine in RNA + glycolate + H(+). The catalysed reaction is an N(2)-(1-hydroxy-2-oxoethyl)-2'-deoxyguanosine in DNA + H2O = a 2'-deoxyguanosine in DNA + glycolate + H(+). Functionally, protein and nucleotide deglycase that catalyzes the deglycation of the Maillard adducts formed between amino groups of proteins or nucleotides and reactive carbonyl groups of glyoxals. Thus, functions as a protein deglycase that repairs methylglyoxal- and glyoxal-glycated proteins, and releases repaired proteins and lactate or glycolate, respectively. Deglycates cysteine, arginine and lysine residues in proteins, and thus reactivates these proteins by reversing glycation by glyoxals. Acts on early glycation intermediates (hemithioacetals and aminocarbinols), preventing the formation of Schiff bases and advanced glycation endproducts (AGE). Also functions as a nucleotide deglycase able to repair glycated guanine in the free nucleotide pool (GTP, GDP, GMP, dGTP) and in DNA and RNA. Is thus involved in a major nucleotide repair system named guanine glycation repair (GG repair), dedicated to reversing methylglyoxal and glyoxal damage via nucleotide sanitization and direct nucleic acid repair. Plays an important role in protecting cells from carbonyl stress. This Staphylococcus aureus (strain Newman) protein is Protein/nucleic acid deglycase HchA.